We begin with the raw amino-acid sequence, 98 residues long: DNA-binding protein Fis (98 aa).

Positions 74 to 93 form a DNA-binding region, H-T-H motif; it reads QTRAALMMGINRGTLRKKLK.

This sequence belongs to the transcriptional regulatory Fis family. In terms of assembly, homodimer.

In terms of biological role, activates ribosomal RNA transcription. Plays a direct role in upstream activation of rRNA promoters. This Citrobacter koseri (strain ATCC BAA-895 / CDC 4225-83 / SGSC4696) protein is DNA-binding protein Fis.